The chain runs to 210 residues: Potassium-transporting ATPase KdpC subunit (210 aa).

Residues 13–33 form a helical membrane-spanning segment; the sequence is LVTLVLLLVCGLAYPLILTGI.

Belongs to the KdpC family. As to quaternary structure, the system is composed of three essential subunits: KdpA, KdpB and KdpC.

The protein resides in the cell membrane. Its function is as follows. Part of the high-affinity ATP-driven potassium transport (or Kdp) system, which catalyzes the hydrolysis of ATP coupled with the electrogenic transport of potassium into the cytoplasm. This subunit acts as a catalytic chaperone that increases the ATP-binding affinity of the ATP-hydrolyzing subunit KdpB by the formation of a transient KdpB/KdpC/ATP ternary complex. This Clostridium kluyveri (strain ATCC 8527 / DSM 555 / NBRC 12016 / NCIMB 10680 / K1) protein is Potassium-transporting ATPase KdpC subunit.